A 1306-amino-acid polypeptide reads, in one-letter code: Kinesin-like protein KIN-14L (1306 aa).

The Kinesin motor domain maps to 142–456 (NVKVFCRSRP…LSFSARAKNA (315 aa)). 223–230 (GQSRSGKT) is an ATP binding site. 2 coiled-coil regions span residues 466–507 (IKKW…ANDQ) and 540–595 (HRIE…ALNS). Polar residues-rich tracts occupy residues 592-611 (ALNS…SVIS) and 660-677 (LGSS…TNAQ). Disordered stretches follow at residues 592-627 (ALNS…SVTK), 657-710 (KSGL…SGAI), and 849-881 (KSHT…RTSL). Residues 855–867 (SRSSSRGSSPGRS) show a composition bias toward low complexity.

The protein belongs to the TRAFAC class myosin-kinesin ATPase superfamily. Kinesin family. KIN-14 subfamily.

In Oryza sativa subsp. japonica (Rice), this protein is Kinesin-like protein KIN-14L.